The chain runs to 630 residues: Alpha-1,4-glucan:maltose-1-phosphate maltosyltransferase (630 aa).

Alpha-maltose 1-phosphate contacts are provided by arginine 234, glutamine 294, and aspartate 329. Aspartate 365 functions as the Nucleophile in the catalytic mechanism. Position 366 (asparagine 366) interacts with alpha-maltose 1-phosphate. The active-site Proton donor is glutamate 394. An alpha-maltose 1-phosphate-binding site is contributed by 504-505 (KY).

This sequence belongs to the glycosyl hydrolase 13 family. GlgE subfamily. Homodimer.

It catalyses the reaction alpha-maltose 1-phosphate + [(1-&gt;4)-alpha-D-glucosyl](n) = [(1-&gt;4)-alpha-D-glucosyl](n+2) + phosphate. In terms of biological role, maltosyltransferase that uses maltose 1-phosphate (M1P) as the sugar donor to elongate linear or branched alpha-(1-&gt;4)-glucans. Is involved in a branched alpha-glucan biosynthetic pathway from trehalose, together with TreS, Mak and GlgB. This is Alpha-1,4-glucan:maltose-1-phosphate maltosyltransferase from Picrophilus torridus (strain ATCC 700027 / DSM 9790 / JCM 10055 / NBRC 100828 / KAW 2/3).